Here is a 159-residue protein sequence, read N- to C-terminus: 2-C-methyl-D-erythritol 2,4-cyclodiphosphate synthase (159 aa).

Positions 10 and 12 each coordinate a divalent metal cation. 4-CDP-2-C-methyl-D-erythritol 2-phosphate contacts are provided by residues 10-12 and 36-37; these read DVH and HS. Histidine 44 is an a divalent metal cation binding site. 4-CDP-2-C-methyl-D-erythritol 2-phosphate-binding positions include 58–60, 134–137, phenylalanine 141, and arginine 144; these read DIG and TTSE.

Belongs to the IspF family. In terms of assembly, homotrimer. A divalent metal cation is required as a cofactor.

It catalyses the reaction 4-CDP-2-C-methyl-D-erythritol 2-phosphate = 2-C-methyl-D-erythritol 2,4-cyclic diphosphate + CMP. Its pathway is isoprenoid biosynthesis; isopentenyl diphosphate biosynthesis via DXP pathway; isopentenyl diphosphate from 1-deoxy-D-xylulose 5-phosphate: step 4/6. Involved in the biosynthesis of isopentenyl diphosphate (IPP) and dimethylallyl diphosphate (DMAPP), two major building blocks of isoprenoid compounds. Catalyzes the conversion of 4-diphosphocytidyl-2-C-methyl-D-erythritol 2-phosphate (CDP-ME2P) to 2-C-methyl-D-erythritol 2,4-cyclodiphosphate (ME-CPP) with a corresponding release of cytidine 5-monophosphate (CMP). The polypeptide is 2-C-methyl-D-erythritol 2,4-cyclodiphosphate synthase (Cereibacter sphaeroides (strain ATCC 17029 / ATH 2.4.9) (Rhodobacter sphaeroides)).